A 258-amino-acid polypeptide reads, in one-letter code: MGRLQRTLSNISEESDTDNGRVAVVGGSIEYPNQPALVGRAALRTGTDHVRTLVPEALYAPVAGSSPNLLVSPYDGDQFDQDAAADAVDICEWADALVIGPGLVDAEADAIRDVLERTDIPVVVDALAIEPALESDLSRAVLTPSGSEDGPIYEAYGSLRAFTEETGAVITLTGGVDVIVTTGERLENDTGTSALTVAGTGDTLAGITASLLGQEMDRQDAAELGAWILGKSGELATAEYGPGVVATDVIECIPKTIR.

The region spanning 1–258 is the YjeF C-terminal domain; that stretch reads MGRLQRTLSN…VIECIPKTIR (258 aa). Residue G201 participates in AMP binding. A (6S)-NADPHX-binding site is contributed by D202.

It belongs to the NnrD/CARKD family. As to quaternary structure, homotetramer. It depends on Mg(2+) as a cofactor.

It catalyses the reaction (6S)-NADHX + ADP = AMP + phosphate + NADH + H(+). The enzyme catalyses (6S)-NADPHX + ADP = AMP + phosphate + NADPH + H(+). In terms of biological role, catalyzes the dehydration of the S-form of NAD(P)HX at the expense of ADP, which is converted to AMP. Together with NAD(P)HX epimerase, which catalyzes the epimerization of the S- and R-forms, the enzyme allows the repair of both epimers of NAD(P)HX, a damaged form of NAD(P)H that is a result of enzymatic or heat-dependent hydration. This Natrialba magadii (strain ATCC 43099 / DSM 3394 / CCM 3739 / CIP 104546 / IAM 13178 / JCM 8861 / NBRC 102185 / NCIMB 2190 / MS3) (Natronobacterium magadii) protein is ADP-dependent (S)-NAD(P)H-hydrate dehydratase.